The primary structure comprises 312 residues: MKEKGLIFDIQSFSVHDGPGCRTSVFFIGCPLQCKWCANPESWTKKKHIMVAENVCKWKNGCRSCINACSHDSIKFSEDGKLKISWDTCEKCETFDCVNMCPNNALKQCVKEYTVDELMTILKRDFNNWGSDGGVTFTGGDPLMHHEFLVEVLKKCYDSQIHKAIETSGYAKQEVFLEVLKYIDFAFIDVKNMDREKHKQGTGVYNDLILSNIEALKKSNWNGRLVLRQPTIAGYNDSDENAYKLIEFMNKNSLYEINLLKFHRLGETKWNQLGKEYEYSKYGDMTNEKMEHLQQLYLDNNIACYIGDNTPF.

In terms of domain architecture, Radical SAM core spans 16–299; that stretch reads HDGPGCRTSV…MEHLQQLYLD (284 aa). Residues Cys30, Cys34, Cys37, Cys56, Cys62, Cys65, and Cys101 each coordinate [4Fe-4S] cluster. Residue 36-38 participates in S-adenosyl-L-methionine binding; it reads WCA. 4Fe-4S ferredoxin-type domains lie at 47 to 79 and 80 to 112; these read KHIMVAENVCKWKNGCRSCINACSHDSIKFSED and GKLKISWDTCEKCETFDCVNMCPNNALKQCVKE. Residues Gly140, 189 to 191, and His263 contribute to the S-adenosyl-L-methionine site; that span reads DVK.

The protein belongs to the organic radical-activating enzymes family. As to quaternary structure, monomer. [4Fe-4S] cluster is required as a cofactor.

It carries out the reaction glycyl-[protein] + reduced [flavodoxin] + S-adenosyl-L-methionine = glycin-2-yl radical-[protein] + semiquinone [flavodoxin] + 5'-deoxyadenosine + L-methionine + H(+). Its function is as follows. Catalyzes activation of 4-hydroxyphenylacetate decarboxylase under anaerobic conditions by generation of an organic free radical on a glycine residue, via a homolytic cleavage of S-adenosyl-L-methionine (SAM). This is 4-hydroxyphenylacetate decarboxylase activating enzyme from Clostridium scatologenes.